Here is a 1529-residue protein sequence, read N- to C-terminus: ABC multidrug transporter AFR2 (1529 aa).

Over residues 1 to 10 (MAFAGVGQGL) the composition is skewed to gly residues. Residues 1–21 (MAFAGVGQGLGTYDRTEQTSG) form a disordered region. An ABC transporter 1 domain is found at 144–394 (GALRDLISNR…FVDMGFHCPS (251 aa)). N-linked (GlcNAc...) asparagine glycans are attached at residues Asn-235 and Asn-318. The next 5 membrane-spanning stretches (helical) occupy residues 505–525 (LTLT…SVFY), 539–559 (ALLF…ILIL), 589–609 (IPYK…MTNL), 614–634 (GPYF…SMLF), and 648–668 (LAPA…AVNV). Asn-742 is a glycosylation site (N-linked (GlcNAc...) asparagine). Residues 757 to 777 (GILIGFFLFFTAIYMTATEFI) traverse the membrane as a helical segment. The region spanning 845 to 1087 (FSWKDVVYDI…ILIDYFEKNG (243 aa)) is the ABC transporter 2 domain. Residue 881-888 (GVSGAGKT) participates in ATP binding. Transmembrane regions (helical) follow at residues 1193 to 1213 (YIWS…FSFF), 1227 to 1247 (FSVF…MPNF), 1268 to 1288 (IFIL…GAVI), 1314 to 1334 (LMFL…IMIV), and 1353 to 1373 (MCLI…FWMF). Asn-1434 carries N-linked (GlcNAc...) asparagine glycosylation. Residues 1465–1485 (FGLLWAYVVFNIIAAVGIYWL) form a helical membrane-spanning segment. The disordered stretch occupies residues 1493 to 1529 (GKEQASEPEGVQEKLVPAQSSEKKRESVSRGSESTAA).

The protein belongs to the ABC transporter superfamily. ABCG family. PDR (TC 3.A.1.205) subfamily.

It is found in the cell membrane. It carries out the reaction itraconazole(in) + ATP + H2O = itraconazole(out) + ADP + phosphate + H(+). The enzyme catalyses voriconazole(in) + ATP + H2O = voriconazole(out) + ADP + phosphate + H(+). It catalyses the reaction fluconazole(in) + ATP + H2O = fluconazole(out) + ADP + phosphate + H(+). Its function is as follows. Pleiotropic ABC efflux transporter that confers resistance to structurally and functionally unrelated compounds including azoles such as fluconazole (FLC), itraconazole (ITC), posaconazole (POS), and voriconazole (VRC). The polypeptide is ABC multidrug transporter AFR2 (Cryptococcus neoformans var. grubii serotype A (strain H99 / ATCC 208821 / CBS 10515 / FGSC 9487) (Filobasidiella neoformans var. grubii)).